A 519-amino-acid polypeptide reads, in one-letter code: MTPANKSDKDRVVIFDTTLRDGEQCPGATMTFEEKIEVAEMLDGMGVDIIEAGFPIASVGDFEAVAEIARNARNAVIAGLARAIPGDIARAGEAVRHARRGRIHTFVSTSPIHLAHQMRKSEAEVLEIITATVKQARNLVEDVEWSAMDATRTPIDYLCKCVEAAIAAGATTINLPDTVGYAVPDEYRRMFKTIRERVPSADKAIFSVHCHDDLGLAVANSLAGVEGGARQVESTINGIGERAGNAALEEVVMAIKTRADVMPYWCNVESTMLTRASKMVSAATSFPVQYNKAIVGRNAFAHESGIHQDGMLKNAQTYEIMTPESVGVKQTSLVMGKHSGRHAFQHKLEELGYKLAENQLQDAFVRFKALADRKKDIYDEDIIALVDEEMAATHDRIKLSSLTVIAGTHGPQRATMKLTVSGQTRIEEAEGNGPVDAVFNCIKRLVPHEAKLELYQVHAVTQGTDAQAEVSVRLSQDGRAMTSKAADPDTLVASAKAYLGALNKIVMKHQRDVPAAAAS.

The Pyruvate carboxyltransferase domain occupies 12-274 (VVIFDTTLRD…WCNVESTMLT (263 aa)). 4 residues coordinate Mn(2+): Asp-21, His-209, His-211, and Asn-245. The regulatory domain stretch occupies residues 398–519 (KLSSLTVIAG…QRDVPAAAAS (122 aa)).

This sequence belongs to the alpha-IPM synthase/homocitrate synthase family. LeuA type 1 subfamily. In terms of assembly, homodimer. It depends on Mn(2+) as a cofactor.

It is found in the cytoplasm. It catalyses the reaction 3-methyl-2-oxobutanoate + acetyl-CoA + H2O = (2S)-2-isopropylmalate + CoA + H(+). It functions in the pathway amino-acid biosynthesis; L-leucine biosynthesis; L-leucine from 3-methyl-2-oxobutanoate: step 1/4. Its function is as follows. Catalyzes the condensation of the acetyl group of acetyl-CoA with 3-methyl-2-oxobutanoate (2-ketoisovalerate) to form 3-carboxy-3-hydroxy-4-methylpentanoate (2-isopropylmalate). The polypeptide is 2-isopropylmalate synthase (Nitrobacter winogradskyi (strain ATCC 25391 / DSM 10237 / CIP 104748 / NCIMB 11846 / Nb-255)).